A 345-amino-acid chain; its full sequence is Anthranilate phosphoribosyltransferase (345 aa).

5-phospho-alpha-D-ribose 1-diphosphate is bound by residues Gly-84, 87 to 88, Thr-92, 94 to 97, 112 to 120, and Ser-124; these read GD, NIST, and KHGNRSVSS. Gly-84 contributes to the anthranilate binding site. Ser-96 is a binding site for Mg(2+). An anthranilate-binding site is contributed by Asn-115. Position 170 (Arg-170) interacts with anthranilate. The Mg(2+) site is built by Asp-229 and Glu-230.

This sequence belongs to the anthranilate phosphoribosyltransferase family. In terms of assembly, homodimer. Mg(2+) is required as a cofactor.

The catalysed reaction is N-(5-phospho-beta-D-ribosyl)anthranilate + diphosphate = 5-phospho-alpha-D-ribose 1-diphosphate + anthranilate. Its pathway is amino-acid biosynthesis; L-tryptophan biosynthesis; L-tryptophan from chorismate: step 2/5. Functionally, catalyzes the transfer of the phosphoribosyl group of 5-phosphorylribose-1-pyrophosphate (PRPP) to anthranilate to yield N-(5'-phosphoribosyl)-anthranilate (PRA). The chain is Anthranilate phosphoribosyltransferase from Xanthomonas axonopodis pv. citri (strain 306).